Here is a 127-residue protein sequence, read N- to C-terminus: Egg cell-secreted protein 1.4 (127 aa).

Positions 1–25 (MASNTTFLFSTVTLLIILLNTTVSG) are cleaved as a signal peptide.

It belongs to the plant egg cell-secreted peptide family. As to expression, restricted to female reproductive tissues, specifically accumulating in storage vesicles of the unfertilized egg cell.

It localises to the cytoplasmic vesicle. Its subcellular location is the secreted. In terms of biological role, involved in the regulation of gamete interactions during the double fertilization and to prevent multiple-pollen tube attraction; mediates the redistribution of the gamete fusogen HAP2/GCS1 to the cell surface after secretion upon sperm arrival. In Arabidopsis thaliana (Mouse-ear cress), this protein is Egg cell-secreted protein 1.4 (EC1.4).